A 396-amino-acid chain; its full sequence is Elongation factor Tu 1 (396 aa).

Residues 10 to 206 (KLHVNVGTIG…ALDTFIPDPT (197 aa)) enclose the tr-type G domain. A G1 region spans residues 19 to 26 (GHVDHGKT). Position 19–26 (19–26 (GHVDHGKT)) interacts with GTP. Position 26 (Thr26) interacts with Mg(2+). A G2 region spans residues 60 to 64 (GITIS). Residues 81 to 84 (DCPG) form a G3 region. Residues 81 to 85 (DCPGH) and 136 to 139 (NKAD) each bind GTP. Positions 136 to 139 (NKAD) are G4. The G5 stretch occupies residues 174 to 176 (SAR).

This sequence belongs to the TRAFAC class translation factor GTPase superfamily. Classic translation factor GTPase family. EF-Tu/EF-1A subfamily. In terms of assembly, monomer.

The protein resides in the cytoplasm. It carries out the reaction GTP + H2O = GDP + phosphate + H(+). GTP hydrolase that promotes the GTP-dependent binding of aminoacyl-tRNA to the A-site of ribosomes during protein biosynthesis. The sequence is that of Elongation factor Tu 1 from Xanthomonas campestris pv. campestris (strain B100).